The following is a 173-amino-acid chain: Nicotinamide-nucleotide adenylyltransferase (173 aa).

It belongs to the archaeal NMN adenylyltransferase family.

It localises to the cytoplasm. It catalyses the reaction beta-nicotinamide D-ribonucleotide + ATP + H(+) = diphosphate + NAD(+). Its pathway is cofactor biosynthesis; NAD(+) biosynthesis; NAD(+) from nicotinamide D-ribonucleotide: step 1/1. The sequence is that of Nicotinamide-nucleotide adenylyltransferase (ffdC) from Methanolobus tindarius.